Here is a 198-residue protein sequence, read N- to C-terminus: MNREEQLGVLESLLFAAGDAGLSTEQLTEVMEITHIEALNLLELLSERYNGNEDRGLILLELAGTFQLATKKAHAEFLRKLVEVPSNTVLSQASLETLAIIAYRQPVTRMEVDEVRGVQTDGPIRTLVAKGLVTDKGRVDGAGRAKLYVTTSEFLDAFGLNSLDDLPKLADPEAEDPDQSEMDLFFDRFNQSKEQEEE.

The tract at residues 167-198 (PKLADPEAEDPDQSEMDLFFDRFNQSKEQEEE) is disordered. A compositionally biased stretch (acidic residues) spans 172–181 (PEAEDPDQSE).

This sequence belongs to the ScpB family. As to quaternary structure, homodimer. Homodimerization may be required to stabilize the binding of ScpA to the Smc head domains. Component of a cohesin-like complex composed of ScpA, ScpB and the Smc homodimer, in which ScpA and ScpB bind to the head domain of Smc. The presence of the three proteins is required for the association of the complex with DNA.

The protein localises to the cytoplasm. Functionally, participates in chromosomal partition during cell division. May act via the formation of a condensin-like complex containing Smc and ScpA that pull DNA away from mid-cell into both cell halves. The chain is Segregation and condensation protein B from Listeria innocua serovar 6a (strain ATCC BAA-680 / CLIP 11262).